We begin with the raw amino-acid sequence, 323 residues long: HTH-type transcriptional activator CmpR (323 aa).

Residues 4–61 enclose the HTH lysR-type domain; sequence LTLHQLKVFEAAARHSSFTRAAEELYLTQPTVSIQVKQLTKAVGLPLFEQIGKRLYLT. Residues 21–40 constitute a DNA-binding region (H-T-H motif); sequence FTRAAEELYLTQPTVSIQVK. The tract at residues 304 to 323 is disordered; that stretch reads IPESTTTDPELDAPQPVVGV.

It belongs to the LysR transcriptional regulatory family.

The protein resides in the cytoplasm. Activates transcription of the cmpABCD operon under carbon dioxide-limited conditions. This Synechococcus elongatus (strain ATCC 33912 / PCC 7942 / FACHB-805) (Anacystis nidulans R2) protein is HTH-type transcriptional activator CmpR (cmpR).